The sequence spans 375 residues: Carbamoyl phosphate synthase small chain (375 aa).

A CPSase region spans residues 1–186 (MRALLALEDG…LEPGGCAWVG (186 aa)). L-glutamine-binding residues include serine 45, glycine 238, and glycine 240. In terms of domain architecture, Glutamine amidotransferase type-1 spans 190–375 (RLVVYDFGIK…RNMVREAAGC (186 aa)). The Nucleophile role is filled by cysteine 265. L-glutamine is bound by residues leucine 266, glutamine 269, asparagine 307, glycine 309, and phenylalanine 310. Catalysis depends on residues histidine 348 and glutamate 350.

This sequence belongs to the CarA family. In terms of assembly, composed of two chains; the small (or glutamine) chain promotes the hydrolysis of glutamine to ammonia, which is used by the large (or ammonia) chain to synthesize carbamoyl phosphate. Tetramer of heterodimers (alpha,beta)4.

It carries out the reaction hydrogencarbonate + L-glutamine + 2 ATP + H2O = carbamoyl phosphate + L-glutamate + 2 ADP + phosphate + 2 H(+). The catalysed reaction is L-glutamine + H2O = L-glutamate + NH4(+). Its pathway is amino-acid biosynthesis; L-arginine biosynthesis; carbamoyl phosphate from bicarbonate: step 1/1. The protein operates within pyrimidine metabolism; UMP biosynthesis via de novo pathway; (S)-dihydroorotate from bicarbonate: step 1/3. Small subunit of the glutamine-dependent carbamoyl phosphate synthetase (CPSase). CPSase catalyzes the formation of carbamoyl phosphate from the ammonia moiety of glutamine, carbonate, and phosphate donated by ATP, constituting the first step of 2 biosynthetic pathways, one leading to arginine and/or urea and the other to pyrimidine nucleotides. The small subunit (glutamine amidotransferase) binds and cleaves glutamine to supply the large subunit with the substrate ammonia. This chain is Carbamoyl phosphate synthase small chain, found in Nitratidesulfovibrio vulgaris (strain ATCC 29579 / DSM 644 / CCUG 34227 / NCIMB 8303 / VKM B-1760 / Hildenborough) (Desulfovibrio vulgaris).